Reading from the N-terminus, the 459-residue chain is V-type ATP synthase beta chain (459 aa).

This sequence belongs to the ATPase alpha/beta chains family.

Functionally, produces ATP from ADP in the presence of a proton gradient across the membrane. The V-type beta chain is a regulatory subunit. The chain is V-type ATP synthase beta chain from Thermoanaerobacter pseudethanolicus (strain ATCC 33223 / 39E) (Clostridium thermohydrosulfuricum).